We begin with the raw amino-acid sequence, 239 residues long: Ribosomal RNA small subunit methyltransferase G (239 aa).

Residues glycine 78, phenylalanine 83, 129–130, and arginine 148 contribute to the S-adenosyl-L-methionine site; that span reads AE.

The protein belongs to the methyltransferase superfamily. RNA methyltransferase RsmG family.

It is found in the cytoplasm. In terms of biological role, specifically methylates the N7 position of a guanine in 16S rRNA. The chain is Ribosomal RNA small subunit methyltransferase G from Clostridium botulinum (strain Loch Maree / Type A3).